A 147-amino-acid chain; its full sequence is UPF0735 ACT domain-containing protein RBAM_024960 (147 aa).

The ACT domain maps to 70–145; that stretch reads TLFFHLEDRS…FIEKVEILGS (76 aa).

The protein belongs to the UPF0735 family.

The polypeptide is UPF0735 ACT domain-containing protein RBAM_024960 (Bacillus velezensis (strain DSM 23117 / BGSC 10A6 / LMG 26770 / FZB42) (Bacillus amyloliquefaciens subsp. plantarum)).